Here is an 84-residue protein sequence, read N- to C-terminus: MARKPASSQDFETTLVQLENIVTHLENGDLPLEEALKEFEQGVQLAKLGQERLQQAEQRIQILLQKTEDAPLNDYKGNDYEGNA.

The protein belongs to the XseB family. In terms of assembly, heterooligomer composed of large and small subunits.

The protein localises to the cytoplasm. The catalysed reaction is Exonucleolytic cleavage in either 5'- to 3'- or 3'- to 5'-direction to yield nucleoside 5'-phosphates.. Functionally, bidirectionally degrades single-stranded DNA into large acid-insoluble oligonucleotides, which are then degraded further into small acid-soluble oligonucleotides. The chain is Exodeoxyribonuclease 7 small subunit from Haemophilus influenzae (strain ATCC 51907 / DSM 11121 / KW20 / Rd).